The primary structure comprises 483 residues: Regulatory protein ViaA (483 aa).

The protein belongs to the ViaA family. Homodimer. Interacts with RavA.

It localises to the cytoplasm. In terms of biological role, component of the RavA-ViaA chaperone complex, which may act on the membrane to optimize the function of some of the respiratory chains. ViaA stimulates the ATPase activity of RavA. The polypeptide is Regulatory protein ViaA (Salmonella heidelberg (strain SL476)).